A 92-amino-acid chain; its full sequence is Small ribosomal subunit protein uS19 (92 aa).

The tract at residues 73 to 92 (EFSPSRTYYGHAADKKAKRR) is disordered.

This sequence belongs to the universal ribosomal protein uS19 family.

Functionally, protein S19 forms a complex with S13 that binds strongly to the 16S ribosomal RNA. The chain is Small ribosomal subunit protein uS19 from Maricaulis maris (strain MCS10) (Caulobacter maris).